Reading from the N-terminus, the 427-residue chain is Serine--tRNA ligase (427 aa).

Residue 231–233 (TAE) coordinates L-serine. 262 to 264 (RSE) is a binding site for ATP. Residue E285 participates in L-serine binding. ATP is bound at residue 349 to 352 (EISS). S385 provides a ligand contact to L-serine.

It belongs to the class-II aminoacyl-tRNA synthetase family. Type-1 seryl-tRNA synthetase subfamily. In terms of assembly, homodimer. The tRNA molecule binds across the dimer.

It is found in the cytoplasm. The catalysed reaction is tRNA(Ser) + L-serine + ATP = L-seryl-tRNA(Ser) + AMP + diphosphate + H(+). It carries out the reaction tRNA(Sec) + L-serine + ATP = L-seryl-tRNA(Sec) + AMP + diphosphate + H(+). It participates in aminoacyl-tRNA biosynthesis; selenocysteinyl-tRNA(Sec) biosynthesis; L-seryl-tRNA(Sec) from L-serine and tRNA(Sec): step 1/1. Catalyzes the attachment of serine to tRNA(Ser). Is also able to aminoacylate tRNA(Sec) with serine, to form the misacylated tRNA L-seryl-tRNA(Sec), which will be further converted into selenocysteinyl-tRNA(Sec). This Brucella melitensis biotype 2 (strain ATCC 23457) protein is Serine--tRNA ligase.